We begin with the raw amino-acid sequence, 261 residues long: Undecaprenyl-diphosphatase (261 aa).

8 consecutive transmembrane segments (helical) span residues 1 to 21 (MNYIQAIILAIIEGITEFLPV), 41 to 61 (FTKLFTIVIQLGAILSVVVLY), 69 to 89 (LDFYFKLLVAFIPAVVLGLLF), 95 to 115 (ALLESPVTVAVSLLVGGIILL), 129 to 149 (ITYLKAFKIGLFQCIAMIPGV), 169 to 186 (AAEFSFFLAVPTMLGATL), 206 to 226 (ILIIGNIVAFLVALLAIKTFI), and 241 to 261 (RIVAGIVLLLIHFFIHPLTLI).

Belongs to the UppP family.

The protein localises to the cell inner membrane. It catalyses the reaction di-trans,octa-cis-undecaprenyl diphosphate + H2O = di-trans,octa-cis-undecaprenyl phosphate + phosphate + H(+). In terms of biological role, catalyzes the dephosphorylation of undecaprenyl diphosphate (UPP). Confers resistance to bacitracin. The protein is Undecaprenyl-diphosphatase of Flavobacterium psychrophilum (strain ATCC 49511 / DSM 21280 / CIP 103535 / JIP02/86).